A 198-amino-acid chain; its full sequence is MTKPTLTYFPVRGRVQFPRCLLEYLGEEYNFNEVKTISDDLRKQLLFKQLPLYQEGDFKIVQTPAIIDYISEKHDFRGKTKEERARAHQCLAGIMEVLDHCLGYSFKMDKQQQEKFRNESPIKKFFEGFEMVLSQNKYLASGEKETYVDLMAFVMVDYVTNLGLMPSGDYPKLISLKKHYESSPQLKKYLESRPQSNF.

In terms of domain architecture, GST N-terminal spans 2–78 (TKPTLTYFPV…YISEKHDFRG (77 aa)). Glutathione contacts are provided by residues Y8, R42, 49-50 (QL), and 62-63 (QT). The GST C-terminal domain maps to 80–198 (TKEERARAHQ…YLESRPQSNF (119 aa)).

Belongs to the GST superfamily. Alpha family.

It catalyses the reaction RX + glutathione = an S-substituted glutathione + a halide anion + H(+). Its function is as follows. Conjugation of reduced glutathione to a wide number of exogenous and endogenous hydrophobic electrophiles. This chain is Putative glutathione S-transferase alpha-5 (gsta5), found in Dictyostelium discoideum (Social amoeba).